Reading from the N-terminus, the 84-residue chain is Putative membrane protein insertion efficiency factor (84 aa).

It belongs to the UPF0161 family.

It localises to the cell inner membrane. Its function is as follows. Could be involved in insertion of integral membrane proteins into the membrane. The polypeptide is Putative membrane protein insertion efficiency factor (Shewanella baltica (strain OS195)).